A 45-amino-acid polypeptide reads, in one-letter code: Photosystem II reaction center protein K (45 aa).

Positions M1 to A8 are excised as a propeptide. The helical transmembrane segment at I23 to G43 threads the bilayer.

The protein belongs to the PsbK family. PSII is composed of 1 copy each of membrane proteins PsbA, PsbB, PsbC, PsbD, PsbE, PsbF, PsbH, PsbI, PsbJ, PsbK, PsbL, PsbM, PsbT, PsbX, PsbY, PsbZ, Psb30/Ycf12, at least 3 peripheral proteins of the oxygen-evolving complex and a large number of cofactors. It forms dimeric complexes.

Its subcellular location is the plastid. It localises to the cyanelle thylakoid membrane. Functionally, one of the components of the core complex of photosystem II (PSII). PSII is a light-driven water:plastoquinone oxidoreductase that uses light energy to abstract electrons from H(2)O, generating O(2) and a proton gradient subsequently used for ATP formation. It consists of a core antenna complex that captures photons, and an electron transfer chain that converts photonic excitation into a charge separation. This chain is Photosystem II reaction center protein K, found in Cyanophora paradoxa.